A 99-amino-acid chain; its full sequence is Aspartyl/glutamyl-tRNA(Asn/Gln) amidotransferase subunit C (99 aa).

The protein belongs to the GatC family. In terms of assembly, heterotrimer of A, B and C subunits.

It carries out the reaction L-glutamyl-tRNA(Gln) + L-glutamine + ATP + H2O = L-glutaminyl-tRNA(Gln) + L-glutamate + ADP + phosphate + H(+). The catalysed reaction is L-aspartyl-tRNA(Asn) + L-glutamine + ATP + H2O = L-asparaginyl-tRNA(Asn) + L-glutamate + ADP + phosphate + 2 H(+). In terms of biological role, allows the formation of correctly charged Asn-tRNA(Asn) or Gln-tRNA(Gln) through the transamidation of misacylated Asp-tRNA(Asn) or Glu-tRNA(Gln) in organisms which lack either or both of asparaginyl-tRNA or glutaminyl-tRNA synthetases. The reaction takes place in the presence of glutamine and ATP through an activated phospho-Asp-tRNA(Asn) or phospho-Glu-tRNA(Gln). The chain is Aspartyl/glutamyl-tRNA(Asn/Gln) amidotransferase subunit C from Ralstonia pickettii (strain 12J).